The chain runs to 275 residues: Protein FAM210A (275 aa).

Residues 68–108 (SSQPADTPRKVPEEREPLTSATEVPKQSPVESDASDPDPLQ) form a disordered region. Positions 74-84 (TPRKVPEEREP) are enriched in basic and acidic residues. In terms of domain architecture, DUF1279 spans 109-221 (DKSISLVQRF…GYMSTPPPVK (113 aa)). Residues 128–148 (VMIPVHLVTSTVWFGSFYYAA) traverse the membrane as a helical segment. Positions 221–271 (KEYLQDRMEETKDKITEKMEETKDKITEKMEETKDKITEKIQETKDKVSFK) form a coiled coil.

This sequence belongs to the FAM210 family. In terms of assembly, interacts with ATAD3A.

It is found in the membrane. It localises to the mitochondrion. The protein resides in the cytoplasm. Functionally, may play a role in the structure and strength of both muscle and bone. This is Protein FAM210A (FAM210A) from Gallus gallus (Chicken).